The chain runs to 688 residues: Eukaryotic translation initiation factor 3 subunit B (688 aa).

Residues 1-28 are disordered; it reads MAKKKGDQYDSDGAEDQDYDEEPVFEDP. The span at 9–25 shows a compositional bias: acidic residues; that stretch reads YDSDGAEDQDYDEEPVF. Residues 57 to 141 enclose the RRM domain; it reads NVIVVDNIPV…HTLLVNLFSD (85 aa). 6 WD repeats span residues 208-246, 247-287, 291-329, 332-367, 440-482, and 527-572; these read RERFTETYVKWSPLGTYIVTFHKQGVVIWGGSSFTKINK, FAHS…EKRS, DGSSNMSMFRWSHDDKYVARMGDNAIHVYETNTFYLLDK, IKVQGIRNFSWSPTDNIIAYWMSEDIDAPARVTLLE, EVKE…EPTM, and GDHY…KRVN. Residues 612–643 are a coiled coil; the sequence is DRVRMTRASKELLEKRAKLREQFVEYRAKRVN.

This sequence belongs to the eIF-3 subunit B family. Component of the eukaryotic translation initiation factor 3 (eIF-3) complex.

It is found in the cytoplasm. Its function is as follows. RNA-binding component of the eukaryotic translation initiation factor 3 (eIF-3) complex, which is involved in protein synthesis of a specialized repertoire of mRNAs and, together with other initiation factors, stimulates binding of mRNA and methionyl-tRNAi to the 40S ribosome. The eIF-3 complex specifically targets and initiates translation of a subset of mRNAs involved in cell proliferation. The sequence is that of Eukaryotic translation initiation factor 3 subunit B from Culex quinquefasciatus (Southern house mosquito).